We begin with the raw amino-acid sequence, 496 residues long: Trimethylamine methyltransferase MttB (496 aa).

Position 331 (pyrrolysine 331) is a non-standard amino acid, pyrrolysine.

The protein belongs to the trimethylamine methyltransferase family.

It carries out the reaction Co(I)-[trimethylamine-specific corrinoid protein] + trimethylamine + H(+) = methyl-Co(III)-[trimethylamine-specific corrinoid protein] + dimethylamine. Catalyzes the transfer of a methyl group from trimethylamine to the corrinoid cofactor of MttC. This is Trimethylamine methyltransferase MttB from Desulfitobacterium hafniense (strain DSM 10664 / DCB-2).